The sequence spans 392 residues: Alkaline phosphatase L (392 aa).

The N-terminal stretch at 1–23 (MYKRSLIAASLSVAALVSAQAMA) is a signal peptide.

It belongs to the PstS family. As to quaternary structure, homodimer.

The protein resides in the secreted. The protein localises to the periplasm. It carries out the reaction a phosphate monoester + H2O = an alcohol + phosphate. Has both a phosphomonoesterase and phosphodiesterase activity. This Pseudomonas aeruginosa (strain UCBPP-PA14) protein is Alkaline phosphatase L.